A 195-amino-acid polypeptide reads, in one-letter code: Small ribosomal subunit protein uS4 (195 aa).

The S4 RNA-binding domain occupies 92–152 (SRLDNIVYRL…EKHKHKANKN (61 aa)).

The protein belongs to the universal ribosomal protein uS4 family. In terms of assembly, part of the 30S ribosomal subunit. Contacts protein S5. The interaction surface between S4 and S5 is involved in control of translational fidelity.

In terms of biological role, one of the primary rRNA binding proteins, it binds directly to 16S rRNA where it nucleates assembly of the body of the 30S subunit. Functionally, with S5 and S12 plays an important role in translational accuracy. This chain is Small ribosomal subunit protein uS4, found in Karelsulcia muelleri (strain GWSS) (Sulcia muelleri).